Here is a 350-residue protein sequence, read N- to C-terminus: Olfactory receptor 52I2 (350 aa).

Residues 1 to 55 are Extracellular-facing; sequence MCQQILRDCILLIHHLCINRKKVSLVMLGPAYNHTMETPASFLLVGIPGLQSSHL. N-linked (GlcNAc...) asparagine glycosylation is present at Asn-33. The helical transmembrane segment at 56-76 threads the bilayer; sequence WLAISLSAMYIIALLGNTIIV. Residues 77-84 lie on the Cytoplasmic side of the membrane; it reads TAIWMDST. Residues 85–105 traverse the membrane as a helical segment; that stretch reads RHEPMYCFLCVLAAVDIVMAS. Topologically, residues 106–129 are extracellular; that stretch reads SVVPKMVSIFCSGDSSISFSACFT. Cys-127 and Cys-219 are joined by a disulfide. The helical transmembrane segment at 130-150 threads the bilayer; it reads QMFFVHLATAVETGLLLTMAF. Topologically, residues 151–169 are cytoplasmic; the sequence is DRYVAICKPLHYKRILTPQ. The chain crosses the membrane as a helical span at residues 170–190; the sequence is VMLGMSMAITIRAIIAITPLS. Topologically, residues 191–226 are extracellular; that stretch reads WMVSHLPFCGSNVVVHSYCEHIALARLACADPVPSS. A helical membrane pass occupies residues 227 to 247; sequence LYSLIGSSLMVGSDVAFIAAS. Topologically, residues 248 to 267 are cytoplasmic; sequence YILILKAVFGLSSKTAQLKA. Residues 268–288 form a helical membrane-spanning segment; it reads LSTCGSHVGVMALYYLPGMAS. Over 289–304 the chain is Extracellular; it reads IYAAWLGQDVVPLHTQ. Residues 305 to 325 traverse the membrane as a helical segment; it reads VLLADLYVIIPATLNPIIYGM. Residues 326 to 350 are Cytoplasmic-facing; it reads RTKQLRERIWSYLMHVLFDHSNLGS.

The protein belongs to the G-protein coupled receptor 1 family.

Its subcellular location is the cell membrane. Odorant receptor. The polypeptide is Olfactory receptor 52I2 (OR52I2) (Homo sapiens (Human)).